The sequence spans 473 residues: 3-isopropylmalate dehydratase large subunit (473 aa).

Residues Cys-351, Cys-414, and Cys-417 each coordinate [4Fe-4S] cluster.

Belongs to the aconitase/IPM isomerase family. LeuC type 1 subfamily. Heterodimer of LeuC and LeuD. [4Fe-4S] cluster serves as cofactor.

The catalysed reaction is (2R,3S)-3-isopropylmalate = (2S)-2-isopropylmalate. It participates in amino-acid biosynthesis; L-leucine biosynthesis; L-leucine from 3-methyl-2-oxobutanoate: step 2/4. In terms of biological role, catalyzes the isomerization between 2-isopropylmalate and 3-isopropylmalate, via the formation of 2-isopropylmaleate. The polypeptide is 3-isopropylmalate dehydratase large subunit (Acidovorax sp. (strain JS42)).